We begin with the raw amino-acid sequence, 452 residues long: Bifunctional protein GlmU (452 aa).

A pyrophosphorylase region spans residues 1–226; sequence MSLDIVILAA…AMEVQGANDR (226 aa). UDP-N-acetyl-alpha-D-glucosamine-binding positions include 8-11, K22, Q73, 78-79, 99-101, G136, E151, N166, and N224; these read LAAG, GT, and YGD. D101 contacts Mg(2+). N224 is a Mg(2+) binding site. The tract at residues 227–247 is linker; it reads IQLAELERHYQLRAARRLMAQ. The tract at residues 248 to 452 is N-acetyltransferase; it reads GVTLRDPARF…IDGWQRPTKK (205 aa). Residues R330 and K348 each coordinate UDP-N-acetyl-alpha-D-glucosamine. The Proton acceptor role is filled by H360. UDP-N-acetyl-alpha-D-glucosamine is bound by residues Y363 and N374. Residues A377, 383 to 384, S402, A420, and R437 contribute to the acetyl-CoA site; that span reads NY.

It in the N-terminal section; belongs to the N-acetylglucosamine-1-phosphate uridyltransferase family. The protein in the C-terminal section; belongs to the transferase hexapeptide repeat family. Homotrimer. It depends on Mg(2+) as a cofactor.

The protein localises to the cytoplasm. It carries out the reaction alpha-D-glucosamine 1-phosphate + acetyl-CoA = N-acetyl-alpha-D-glucosamine 1-phosphate + CoA + H(+). The catalysed reaction is N-acetyl-alpha-D-glucosamine 1-phosphate + UTP + H(+) = UDP-N-acetyl-alpha-D-glucosamine + diphosphate. It functions in the pathway nucleotide-sugar biosynthesis; UDP-N-acetyl-alpha-D-glucosamine biosynthesis; N-acetyl-alpha-D-glucosamine 1-phosphate from alpha-D-glucosamine 6-phosphate (route II): step 2/2. Its pathway is nucleotide-sugar biosynthesis; UDP-N-acetyl-alpha-D-glucosamine biosynthesis; UDP-N-acetyl-alpha-D-glucosamine from N-acetyl-alpha-D-glucosamine 1-phosphate: step 1/1. The protein operates within bacterial outer membrane biogenesis; LPS lipid A biosynthesis. In terms of biological role, catalyzes the last two sequential reactions in the de novo biosynthetic pathway for UDP-N-acetylglucosamine (UDP-GlcNAc). The C-terminal domain catalyzes the transfer of acetyl group from acetyl coenzyme A to glucosamine-1-phosphate (GlcN-1-P) to produce N-acetylglucosamine-1-phosphate (GlcNAc-1-P), which is converted into UDP-GlcNAc by the transfer of uridine 5-monophosphate (from uridine 5-triphosphate), a reaction catalyzed by the N-terminal domain. The sequence is that of Bifunctional protein GlmU from Stutzerimonas stutzeri (strain A1501) (Pseudomonas stutzeri).